Here is a 361-residue protein sequence, read N- to C-terminus: Dihydroorotate dehydrogenase (quinone) (361 aa).

FMN contacts are provided by residues 67-71 (AGLDK) and T91. K71 provides a ligand contact to substrate. 116 to 120 (NRMGF) contributes to the substrate binding site. 2 residues coordinate FMN: N145 and N178. N178 serves as a coordination point for substrate. The active-site Nucleophile is S181. N183 contributes to the substrate binding site. Residues K223 and G251 each coordinate FMN. 252-253 (NT) contributes to the substrate binding site. Residues G273, G302, and 323-324 (YT) each bind FMN.

The protein belongs to the dihydroorotate dehydrogenase family. Type 2 subfamily. In terms of assembly, monomer. FMN is required as a cofactor.

The protein resides in the cell membrane. It carries out the reaction (S)-dihydroorotate + a quinone = orotate + a quinol. Its pathway is pyrimidine metabolism; UMP biosynthesis via de novo pathway; orotate from (S)-dihydroorotate (quinone route): step 1/1. In terms of biological role, catalyzes the conversion of dihydroorotate to orotate with quinone as electron acceptor. The chain is Dihydroorotate dehydrogenase (quinone) from Deinococcus geothermalis (strain DSM 11300 / CIP 105573 / AG-3a).